A 259-amino-acid chain; its full sequence is tRNA (guanine-N(7)-)-methyltransferase (259 aa).

A disordered region spans residues 1–36; sequence MTFPSHNPPETGHPSAAPDEALPAAEAPVPGDPEAR. Residues 14-29 show a composition bias toward low complexity; that stretch reads PSAAPDEALPAAEAPV. S-adenosyl-L-methionine is bound by residues Glu-91, Glu-116, Asp-143, and Asp-166. The active site involves Asp-166. Residues Lys-170, Asp-202, and 237–240 contribute to the substrate site; that span reads TKFE.

The protein belongs to the class I-like SAM-binding methyltransferase superfamily. TrmB family.

The enzyme catalyses guanosine(46) in tRNA + S-adenosyl-L-methionine = N(7)-methylguanosine(46) in tRNA + S-adenosyl-L-homocysteine. It participates in tRNA modification; N(7)-methylguanine-tRNA biosynthesis. In terms of biological role, catalyzes the formation of N(7)-methylguanine at position 46 (m7G46) in tRNA. In Aromatoleum aromaticum (strain DSM 19018 / LMG 30748 / EbN1) (Azoarcus sp. (strain EbN1)), this protein is tRNA (guanine-N(7)-)-methyltransferase.